Here is a 479-residue protein sequence, read N- to C-terminus: Aspartyl/glutamyl-tRNA(Asn/Gln) amidotransferase subunit B (479 aa).

It belongs to the GatB/GatE family. GatB subfamily. As to quaternary structure, heterotrimer of A, B and C subunits.

The enzyme catalyses L-glutamyl-tRNA(Gln) + L-glutamine + ATP + H2O = L-glutaminyl-tRNA(Gln) + L-glutamate + ADP + phosphate + H(+). The catalysed reaction is L-aspartyl-tRNA(Asn) + L-glutamine + ATP + H2O = L-asparaginyl-tRNA(Asn) + L-glutamate + ADP + phosphate + 2 H(+). In terms of biological role, allows the formation of correctly charged Asn-tRNA(Asn) or Gln-tRNA(Gln) through the transamidation of misacylated Asp-tRNA(Asn) or Glu-tRNA(Gln) in organisms which lack either or both of asparaginyl-tRNA or glutaminyl-tRNA synthetases. The reaction takes place in the presence of glutamine and ATP through an activated phospho-Asp-tRNA(Asn) or phospho-Glu-tRNA(Gln). The polypeptide is Aspartyl/glutamyl-tRNA(Asn/Gln) amidotransferase subunit B (Deinococcus radiodurans (strain ATCC 13939 / DSM 20539 / JCM 16871 / CCUG 27074 / LMG 4051 / NBRC 15346 / NCIMB 9279 / VKM B-1422 / R1)).